Reading from the N-terminus, the 588-residue chain is L-fucose isomerase (588 aa).

Catalysis depends on proton acceptor residues Glu335 and Asp359. 3 residues coordinate Mn(2+): Glu335, Asp359, and His525.

This sequence belongs to the L-fucose isomerase family. The cofactor is Mn(2+).

It localises to the cytoplasm. The catalysed reaction is L-fucose = L-fuculose. It functions in the pathway carbohydrate degradation; L-fucose degradation; L-lactaldehyde and glycerone phosphate from L-fucose: step 1/3. Functionally, converts the aldose L-fucose into the corresponding ketose L-fuculose. This is L-fucose isomerase from Streptococcus pneumoniae (strain 70585).